The primary structure comprises 479 residues: Odorant receptor coreceptor (479 aa).

Residues 1-43 lie on the Cytoplasmic side of the membrane; it reads MHVQPTKYHGLVLDLMPNIRLMQGFGHFLFRYVSGPVLIRKLY. Residues 44 to 64 traverse the membrane as a helical segment; sequence SWWNLIMILLQYFAIMGNLVM. The Extracellular portion of the chain corresponds to 65–73; sequence NTGDVNELT. Residues 74–94 traverse the membrane as a helical segment; the sequence is ANTITTLFFTHSVTKFIYVAV. Residues 95 to 133 lie on the Cytoplasmic side of the membrane; sequence NSEHFYRTLGIWNQPNSHSLFAESDARYHSIALAKMRKL. A helical membrane pass occupies residues 134–154; it reads LVMVMVTTVLSVVAWITITFF. The Extracellular portion of the chain corresponds to 155-187; it reads GDSVKNVFDKETNETYTVEIPRLPIKALYPWDA. Asn-167 is a glycosylation site (N-linked (GlcNAc...) asparagine). The chain crosses the membrane as a helical span at residues 188–208; sequence MSGVPYFFSFVYQAYFLLFSM. Topologically, residues 209-344 are cytoplasmic; the sequence is CQANLADVMF…VERHKHVVRL (136 aa). The chain crosses the membrane as a helical span at residues 345–365; that stretch reads VSAIGETYGAALLLHMLTSTI. The Extracellular segment spans residues 366–383; that stretch reads KLTLLAYQATKIDALNVY. Residues 384–404 form a helical membrane-spanning segment; the sequence is GLTVIGYLVYALAQVFLFCIF. The Cytoplasmic segment spans residues 405–455; that stretch reads GNRLIEESSSVMEAAYSCHWYDGSEEAKTFVQIVCQQCQKAMTISGAKFFT. A helical transmembrane segment spans residues 456 to 476; sequence VSLDLFASVLGAVVTYFMVLV. Topologically, residues 477 to 479 are extracellular; it reads QLK.

Belongs to the insect chemoreceptor superfamily. Heteromeric odorant receptor channel (TC 1.A.69) family. Orco subfamily. Heterodimer with conventional odorant receptors (ORs). As to expression, expressed in female antenna, maxillary palp and proboscis. Not detected in male tissues.

It is found in the cell membrane. Its function is as follows. Odorant coreceptor which complexes with conventional odorant receptors (ORs) to form odorant-sensing units, providing sensitive and prolonged odorant signaling and calcium permeability. Orco is a universal and integral part of the functional odorant receptor, involved in the dendritic localization of other olfactory receptors. Required for detecting a host for blood feeding. Plays a key role in preferred attraction of females for humans over non-human hosts for blood feeding. The protein is Odorant receptor coreceptor of Aedes albopictus (Asian tiger mosquito).